The chain runs to 201 residues: Small ribosomal subunit protein uS4c (201 aa).

Residues 15–44 (LGALPGLTSKRPRSGSDLRNQSRSGKKSQY) form a disordered region. One can recognise an S4 RNA-binding domain in the interval 89-150 (MRLDNILFRL…EQRSRALIQN (62 aa)).

It belongs to the universal ribosomal protein uS4 family. In terms of assembly, part of the 30S ribosomal subunit. Contacts protein S5. The interaction surface between S4 and S5 is involved in control of translational fidelity.

The protein localises to the plastid. The protein resides in the chloroplast. One of the primary rRNA binding proteins, it binds directly to 16S rRNA where it nucleates assembly of the body of the 30S subunit. Its function is as follows. With S5 and S12 plays an important role in translational accuracy. The polypeptide is Small ribosomal subunit protein uS4c (rps4) (Calycanthus floridus var. glaucus (Eastern sweetshrub)).